A 111-amino-acid polypeptide reads, in one-letter code: Probable 4-amino-4-deoxy-L-arabinose-phosphoundecaprenol flippase subunit ArnE (111 aa).

The next 3 membrane-spanning stretches (helical) occupy residues Ile-36–Leu-56, Val-61–Ala-81, and Pro-88–Gly-108. In terms of domain architecture, EamA spans Leu-40–Ser-109.

It belongs to the ArnE family. Heterodimer of ArnE and ArnF.

The protein localises to the cell inner membrane. The protein operates within bacterial outer membrane biogenesis; lipopolysaccharide biosynthesis. In terms of biological role, translocates 4-amino-4-deoxy-L-arabinose-phosphoundecaprenol (alpha-L-Ara4N-phosphoundecaprenol) from the cytoplasmic to the periplasmic side of the inner membrane. The polypeptide is Probable 4-amino-4-deoxy-L-arabinose-phosphoundecaprenol flippase subunit ArnE (Shigella flexneri).